A 213-amino-acid polypeptide reads, in one-letter code: Type II restriction enzyme BamHI (213 aa).

Mg(2+) contacts are provided by E77, D94, E111, and F112. The Proton acceptor role is filled by E113.

As to quaternary structure, homodimer. The cofactor is Mg(2+).

The enzyme catalyses Endonucleolytic cleavage of DNA to give specific double-stranded fragments with terminal 5'-phosphates.. A P subtype restriction enzyme that recognizes the double-stranded sequence 5'-GGATCC-3' and cleaves after G-1. This chain is Type II restriction enzyme BamHI, found in Bacillus amyloliquefaciens (Bacillus velezensis).